A 427-amino-acid chain; its full sequence is MTEAMKITLSPQPADARWGEKATYSINNDGITLHLNGADDLGLIQRAARKIDGLGIKHVQLSGEGWDADRCWAFWQGYKAPKGIRKVEWPDLDDAQRQELDNRLMIIDWVRDTINAPAEELGPSQLAQRAVDLISNVAGDRVTYRITKGEDLREQGYMGLHTVGRGSERSPVLLALDYNPTGDKEAPVYACLVGKGITFDSGGYSIKQTAFMDSMKSDMGGAATVTGALAFAITRGLNKRVKLFLCCADNLISGNAFKLGDIITYRNGKKVEVMNTDAEGRLVLADGLIDASAQKPELIIDAATLTGAAKTALGNDYHALFSFDDALAGRLLASAAQENEPFWRLPLAEFHRNQLPSNFAELNNTGSAAYPAGASTAAGFLSHFVENYQQGWLHIDCSATYRKAPVEQWSAGATGLGVRTIANLLTA.

Residues lysine 195 and aspartate 200 each contribute to the Mn(2+) site. Lysine 207 is a catalytic residue. Mn(2+)-binding residues include aspartate 218, aspartate 277, and glutamate 279. The active site involves arginine 281.

It belongs to the peptidase M17 family. In terms of assembly, homohexamer. Mn(2+) is required as a cofactor.

The protein resides in the cytoplasm. The enzyme catalyses Release of an N-terminal amino acid, Xaa, from a peptide or arylamide. Xaa is preferably Glu or Asp but may be other amino acids, including Leu, Met, His, Cys and Gln.. In terms of biological role, probably plays an important role in intracellular peptide degradation. The chain is Peptidase B from Escherichia coli O127:H6 (strain E2348/69 / EPEC).